We begin with the raw amino-acid sequence, 21 residues long: Nigrocin-2GRb (21 aa).

In terms of tissue distribution, expressed by the skin glands.

It is found in the secreted. In terms of biological role, antimicrobial peptide active against the Gram-positive bacterium S.aureus (MIC=12.5 uM) and against the Gram-negative bacteria E.coli (MIC=3 uM). Has antifungal activity against C.albicans (MIC=50 uM). Has some hemolytic activity against human erythrocytes (LC(50)=40 uM). The polypeptide is Nigrocin-2GRb (Odorrana grahami (Yunnanfu frog)).